The primary structure comprises 436 residues: Glutamyl-tRNA reductase (436 aa).

Substrate is bound by residues 49-52 (TCNR), Ser118, 123-125 (EPQ), and Gln129. The Nucleophile role is filled by Cys50. 203 to 208 (GAGETI) contacts NADP(+).

The protein belongs to the glutamyl-tRNA reductase family. Homodimer.

It carries out the reaction (S)-4-amino-5-oxopentanoate + tRNA(Glu) + NADP(+) = L-glutamyl-tRNA(Glu) + NADPH + H(+). The protein operates within porphyrin-containing compound metabolism; protoporphyrin-IX biosynthesis; 5-aminolevulinate from L-glutamyl-tRNA(Glu): step 1/2. In terms of biological role, catalyzes the NADPH-dependent reduction of glutamyl-tRNA(Glu) to glutamate 1-semialdehyde (GSA). The polypeptide is Glutamyl-tRNA reductase (Actinobacillus pleuropneumoniae serotype 7 (strain AP76)).